Reading from the N-terminus, the 348-residue chain is Uroporphyrinogen decarboxylase (348 aa).

Substrate is bound by residues 27–31 (RQAGR), Phe46, Asp76, Tyr152, Ser207, and His320.

The protein belongs to the uroporphyrinogen decarboxylase family. In terms of assembly, homodimer.

The protein resides in the cytoplasm. The catalysed reaction is uroporphyrinogen III + 4 H(+) = coproporphyrinogen III + 4 CO2. It functions in the pathway porphyrin-containing compound metabolism; protoporphyrin-IX biosynthesis; coproporphyrinogen-III from 5-aminolevulinate: step 4/4. Catalyzes the decarboxylation of four acetate groups of uroporphyrinogen-III to yield coproporphyrinogen-III. The protein is Uroporphyrinogen decarboxylase of Bacillus cereus (strain B4264).